The following is a 190-amino-acid chain: ATP synthase subunit delta (190 aa).

It belongs to the ATPase delta chain family. As to quaternary structure, F-type ATPases have 2 components, F(1) - the catalytic core - and F(0) - the membrane proton channel. F(1) has five subunits: alpha(3), beta(3), gamma(1), delta(1), epsilon(1). F(0) has three main subunits: a(1), b(2) and c(10-14). The alpha and beta chains form an alternating ring which encloses part of the gamma chain. F(1) is attached to F(0) by a central stalk formed by the gamma and epsilon chains, while a peripheral stalk is formed by the delta and b chains.

The protein resides in the cell inner membrane. In terms of biological role, f(1)F(0) ATP synthase produces ATP from ADP in the presence of a proton or sodium gradient. F-type ATPases consist of two structural domains, F(1) containing the extramembraneous catalytic core and F(0) containing the membrane proton channel, linked together by a central stalk and a peripheral stalk. During catalysis, ATP synthesis in the catalytic domain of F(1) is coupled via a rotary mechanism of the central stalk subunits to proton translocation. This protein is part of the stalk that links CF(0) to CF(1). It either transmits conformational changes from CF(0) to CF(1) or is implicated in proton conduction. In Methylobacterium sp. (strain 4-46), this protein is ATP synthase subunit delta.